A 470-amino-acid polypeptide reads, in one-letter code: 3-isopropylmalate dehydratase large subunit (470 aa).

Positions 348, 409, and 412 each coordinate [4Fe-4S] cluster.

This sequence belongs to the aconitase/IPM isomerase family. LeuC type 1 subfamily. As to quaternary structure, heterodimer of LeuC and LeuD. Requires [4Fe-4S] cluster as cofactor.

The catalysed reaction is (2R,3S)-3-isopropylmalate = (2S)-2-isopropylmalate. It functions in the pathway amino-acid biosynthesis; L-leucine biosynthesis; L-leucine from 3-methyl-2-oxobutanoate: step 2/4. In terms of biological role, catalyzes the isomerization between 2-isopropylmalate and 3-isopropylmalate, via the formation of 2-isopropylmaleate. In Thioalkalivibrio sulfidiphilus (strain HL-EbGR7), this protein is 3-isopropylmalate dehydratase large subunit.